The chain runs to 164 residues: MAAKEASFDVVSEVNMEEVKNAIQIALKELKNRFDFKGSIADIKLENDKLVVVAEDDYKVEQVKDILFGKLVKRNVPIKNIHFSESEKALGGTARQYGDLISGIDKENAKKINTAIKNSGIKVKSQIQEDKIRVTGKSRDDLQKVMALLRELDLPMALEFNNYR.

This sequence belongs to the YajQ family.

Nucleotide-binding protein. The polypeptide is Nucleotide-binding protein EF_1165 (Enterococcus faecalis (strain ATCC 700802 / V583)).